A 1342-amino-acid polypeptide reads, in one-letter code: DNA-directed RNA polymerase subunit beta (1342 aa).

Belongs to the RNA polymerase beta chain family. The RNAP catalytic core consists of 2 alpha, 1 beta, 1 beta' and 1 omega subunit. When a sigma factor is associated with the core the holoenzyme is formed, which can initiate transcription.

It catalyses the reaction RNA(n) + a ribonucleoside 5'-triphosphate = RNA(n+1) + diphosphate. Its function is as follows. DNA-dependent RNA polymerase catalyzes the transcription of DNA into RNA using the four ribonucleoside triphosphates as substrates. The polypeptide is DNA-directed RNA polymerase subunit beta (Salmonella gallinarum (strain 287/91 / NCTC 13346)).